A 208-amino-acid chain; its full sequence is Holliday junction resolvase RecU (208 aa).

4 residues coordinate Mg(2+): T87, D89, E102, and Q121.

It belongs to the RecU family. Requires Mg(2+) as cofactor.

Its subcellular location is the cytoplasm. The enzyme catalyses Endonucleolytic cleavage at a junction such as a reciprocal single-stranded crossover between two homologous DNA duplexes (Holliday junction).. In terms of biological role, endonuclease that resolves Holliday junction intermediates in genetic recombination. Cleaves mobile four-strand junctions by introducing symmetrical nicks in paired strands. Promotes annealing of linear ssDNA with homologous dsDNA. Required for DNA repair, homologous recombination and chromosome segregation. The protein is Holliday junction resolvase RecU of Staphylococcus aureus (strain Mu3 / ATCC 700698).